Reading from the N-terminus, the 506-residue chain is MAALLRRLLQRGRPLAASGRRVGRREARLGTGPGVAVRVRFAPSPTGFLHLGGLRTALYNYIFAKKYQGSFILRLEDTDQTRFVPGAAENIENMLEWAGIPPDESPRRGGPAGPYQQSQRLELYAQATEALLKTGAAYPCFCSPQRLELLKKEALRNHQMPRYDNRCRNMSQEQVAQKLAKDPKPAIRFRLEQAAPAFEDLVYGWNRHDVASVEGDPVIMKSDGFPTYHLACVVDDHHMGISHVLRGSEWLISTAKHLLLYQALGWHPPHFAHLPLLLNRDGSKLSKRQGDIFLEHFAAEGFLPDSLLDIITNCGSGFAENQMGRTLPELITQFNLTRVTCHSALLDLEKLPEFNRLHLQRLVNNESQRCQLVEKLQALVEEAFGSQLQNRDVLNPIYMERILLLRQGHICRLQDLVSPVYSYLWTRPSVGRAQLDAISEEVDVIAKRVLGLLERSGMSLTQDMLSGELKKLSEGLEGTKHSNVMKLLRVALSGQQALSSMFKVQG.

The N-terminal 41 residues, 1-41 (MAALLRRLLQRGRPLAASGRRVGRREARLGTGPGVAVRVRF), are a transit peptide targeting the mitochondrion. L-glutamate is bound at residue 40–42 (RFA). Positions 45–53 (PTGFLHLGG) match the 'HIGH' region motif. Residue His-50 coordinates ATP. L-glutamate-binding positions include Glu-76, 228–232 (YHLAC), and Arg-246. Position 249 (Glu-249) interacts with ATP. An N6-succinyllysine modification is found at Lys-256. Residue 284 to 288 (KLSKR) coordinates ATP. The short motif at 284-288 (KLSKR) is the 'KMSKS' region element. Residue Lys-486 is modified to N6-acetyllysine.

Belongs to the class-I aminoacyl-tRNA synthetase family. Glutamate--tRNA ligase type 1 subfamily.

It localises to the mitochondrion matrix. It catalyses the reaction tRNA(Glx) + L-glutamate + ATP = L-glutamyl-tRNA(Glx) + AMP + diphosphate. The enzyme catalyses tRNA(Glu) + L-glutamate + ATP = L-glutamyl-tRNA(Glu) + AMP + diphosphate. It carries out the reaction tRNA(Gln) + L-glutamate + ATP = L-glutamyl-tRNA(Gln) + AMP + diphosphate. Functionally, non-discriminating glutamyl-tRNA synthetase that catalyzes aminoacylation of both mitochondrial tRNA(Glu) and tRNA(Gln) and participates in RNA aminoacylation for mitochondrial protein translation. Attachs glutamate to tRNA(Glu) or tRNA(Gln) in a two-step reaction: glutamate is first activated by ATP to form Glu-AMP and then transferred to the acceptor end of tRNA(Glu) or tRNA(Gln). In vitro, cytoplasmic tRNA(Gln) is slightly glutamylated, but with low activity. In Macaca fascicularis (Crab-eating macaque), this protein is Nondiscriminating glutamyl-tRNA synthetase EARS2, mitochondrial.